Here is a 323-residue protein sequence, read N- to C-terminus: tRNA-dihydrouridine(20/20a) synthase (323 aa).

FMN is bound by residues 14–16 and Q66; that span reads PML. C96 (proton donor) is an active-site residue. Residues K135, H166, 206–208, and 228–229 contribute to the FMN site; these read NGG and GR.

The protein belongs to the Dus family. DusA subfamily. FMN serves as cofactor.

The enzyme catalyses 5,6-dihydrouridine(20) in tRNA + NADP(+) = uridine(20) in tRNA + NADPH + H(+). It carries out the reaction 5,6-dihydrouridine(20) in tRNA + NAD(+) = uridine(20) in tRNA + NADH + H(+). The catalysed reaction is 5,6-dihydrouridine(20a) in tRNA + NADP(+) = uridine(20a) in tRNA + NADPH + H(+). It catalyses the reaction 5,6-dihydrouridine(20a) in tRNA + NAD(+) = uridine(20a) in tRNA + NADH + H(+). Its function is as follows. Catalyzes the synthesis of 5,6-dihydrouridine (D), a modified base found in the D-loop of most tRNAs, via the reduction of the C5-C6 double bond in target uridines. Specifically modifies U20 and U20a in tRNAs. The chain is tRNA-dihydrouridine(20/20a) synthase from Haemophilus ducreyi (strain 35000HP / ATCC 700724).